Consider the following 234-residue polypeptide: Adenosine 5'-phosphosulfate reductase (234 aa).

Residues Cys120, Cys121, Cys203, and Cys206 each coordinate [4Fe-4S] cluster. The active-site Nucleophile; cysteine thiosulfonate intermediate is Cys229.

It belongs to the PAPS reductase family. CysH subfamily. [4Fe-4S] cluster serves as cofactor.

It localises to the cytoplasm. The catalysed reaction is [thioredoxin]-disulfide + sulfite + AMP + 2 H(+) = adenosine 5'-phosphosulfate + [thioredoxin]-dithiol. It functions in the pathway sulfur metabolism; hydrogen sulfide biosynthesis; sulfite from sulfate. Catalyzes the formation of sulfite from adenosine 5'-phosphosulfate (APS) using thioredoxin as an electron donor. This is Adenosine 5'-phosphosulfate reductase from Bacillus thuringiensis subsp. konkukian (strain 97-27).